The sequence spans 191 residues: Peptidyl-tRNA hydrolase (191 aa).

A tRNA-binding site is contributed by tyrosine 15. Residue histidine 20 is the Proton acceptor of the active site. Phenylalanine 66, asparagine 68, and asparagine 114 together coordinate tRNA.

The protein belongs to the PTH family. In terms of assembly, monomer.

Its subcellular location is the cytoplasm. It carries out the reaction an N-acyl-L-alpha-aminoacyl-tRNA + H2O = an N-acyl-L-amino acid + a tRNA + H(+). Hydrolyzes ribosome-free peptidyl-tRNAs (with 1 or more amino acids incorporated), which drop off the ribosome during protein synthesis, or as a result of ribosome stalling. In terms of biological role, catalyzes the release of premature peptidyl moieties from peptidyl-tRNA molecules trapped in stalled 50S ribosomal subunits, and thus maintains levels of free tRNAs and 50S ribosomes. This chain is Peptidyl-tRNA hydrolase, found in Streptococcus agalactiae serotype III (strain NEM316).